Here is a 61-residue protein sequence, read N- to C-terminus: Photosystem II reaction center protein Z (61 aa).

The next 2 membrane-spanning stretches (helical) occupy residues 8–28 and 41–61; these read ALLV…VLFS and LVGS…SFFK.

Belongs to the PsbZ family. As to quaternary structure, PSII is composed of 1 copy each of membrane proteins PsbA, PsbB, PsbC, PsbD, PsbE, PsbF, PsbH, PsbI, PsbJ, PsbK, PsbL, PsbM, PsbT, PsbX, PsbY, PsbZ, Psb30/Ycf12, peripheral proteins PsbO, CyanoQ (PsbQ), PsbU, PsbV and a large number of cofactors. It forms dimeric complexes.

It is found in the cellular thylakoid membrane. In terms of biological role, may control the interaction of photosystem II (PSII) cores with the light-harvesting antenna, regulates electron flow through the 2 photosystem reaction centers. PSII is a light-driven water plastoquinone oxidoreductase, using light energy to abstract electrons from H(2)O, generating a proton gradient subsequently used for ATP formation. The chain is Photosystem II reaction center protein Z from Synechococcus sp. (strain JA-3-3Ab) (Cyanobacteria bacterium Yellowstone A-Prime).